Reading from the N-terminus, the 246-residue chain is Dehydration-responsive element-binding protein 1H (246 aa).

The segment at 1 to 43 is disordered; it reads MDMAGHEVNSSSSSSGAESSSSSSGRQQYKKRPAGRTKFRETR. Low complexity predominate over residues 10 to 24; sequence SSSSSSGAESSSSSS. Residues 28–37 show a composition bias toward basic residues; sequence QYKKRPAGRT. Residues 46–110 constitute a DNA-binding region (AP2/ERF); it reads VYRGVRRRGG…GGGAACLNFQ (65 aa). Positions 155–187 are disordered; that stretch reads AMDEATSGVSAPPPLANNAGSSETPGPSSIDGT. The segment covering 172–181 has biased composition (polar residues); that stretch reads NAGSSETPGP.

The protein belongs to the AP2/ERF transcription factor family. ERF subfamily.

It localises to the nucleus. In terms of biological role, transcriptional activator that binds specifically to the DNA sequence 5'-[AG]CCGAC-3'. Binding to the C-repeat/DRE element mediates high salinity- and dehydration-inducible transcription. In Oryza sativa subsp. indica (Rice), this protein is Dehydration-responsive element-binding protein 1H (DREB1H).